The chain runs to 1413 residues: Zinc finger protein 609 (1413 aa).

Disordered stretches follow at residues 1–26 (MSLSSGACGGKGVDANPVETYDSGDE), 47–196 (QKLE…GRGS), 354–484 (RFCD…EPTL), 517–659 (AHAH…RPIA), and 695–765 (PNSP…AAGD). S358, S361, and S379 each carry phosphoserine. A Phosphothreonine modification is found at T381. Residues 386 to 405 (AAAASDSKGTSSSSKTRAGA) are compositionally biased toward low complexity. Residues S413, S433, S446, S452, S467, and S470 each carry the phosphoserine modification. The segment covering 423–437 (ASSTSEDVKASPSSA) has biased composition (polar residues). K479 participates in a covalent cross-link: Glycyl lysine isopeptide (Lys-Gly) (interchain with G-Cter in SUMO2). A C2H2-type zinc finger spans residues 495 to 520 (IDCPHPNCNKKYKHINGLKYHQAHAH). Residues 519 to 529 (AHTDDDSKPEA) show a composition bias toward basic and acidic residues. Residues S533, S575, and S577 each carry the phosphoserine modification. Positions 625–648 (SLERKCMEKEKCKKPSSLKSEKIP) are enriched in basic and acidic residues. Basic residues predominate over residues 725 to 735 (DKKKKDKKKKD). S742 bears the Phosphoserine mark. Position 745 is a phosphothreonine (T745). The span at 750 to 763 (CRAEEGKSPFRDAA) shows a compositional bias: basic and acidic residues. Position 757 is a phosphoserine (S757). Residue K788 forms a Glycyl lysine isopeptide (Lys-Gly) (interchain with G-Cter in SUMO2) linkage. Polar residues predominate over residues 797–843 (FTDNAPSPSIGGSSRLDSTTPTQPLTPLHVVTQNGAEASSVKTNSPA). Disordered regions lie at residues 797-962 (FTDN…VIQQ), 1004-1127 (YEEQ…RQAE), 1154-1221 (IKSE…SPLT), and 1273-1369 (SKVS…STHH). At S803 the chain carries Phosphoserine. T822 is subject to Phosphothreonine. Residues S841, S845, and S848 each carry the phosphoserine modification. Basic and acidic residues predominate over residues 854–875 (GEGKVDSAKSKDPEQLVKEGAK). Residues 902–916 (YAQSSPGTLTSSSQA) show a composition bias toward polar residues. Positions 925-949 (TKKDEEPESVEGKVKNDVCEEKKPE) are enriched in basic and acidic residues. Residues 950 to 962 (LSNSSQQPSVIQQ) show a composition bias toward polar residues. Basic and acidic residues predominate over residues 1022-1044 (GLDKKTEMGLKEREASLKEEWKQ). S1057 carries the phosphoserine modification. K1063 is covalently cross-linked (Glycyl lysine isopeptide (Lys-Gly) (interchain with G-Cter in SUMO2)). Composition is skewed to basic and acidic residues over residues 1099 to 1115 (LKGKLGEASHLGKEASE), 1154 to 1189 (IKSEDDRWKEERDRKLKEDRSRSKDSVPKEDGKEST), and 1197 to 1210 (PSEESRLGSKEPRP). K1155 is covalently cross-linked (Glycyl lysine isopeptide (Lys-Gly) (interchain with G-Cter in SUMO2)). The span at 1288–1298 (PSVSCKASSES) shows a compositional bias: polar residues. A Glycyl lysine isopeptide (Lys-Gly) (interchain with G-Cter in SUMO2) cross-link involves residue K1299. Over residues 1330-1348 (GCGVVGGGGSCGSVAGAGG) the composition is skewed to gly residues.

As to quaternary structure, interacts (via N-terminus) with NIPBL. Interacts with the multiprotein complex Integrator. Expressed in myoblasts. Expressed in neurons in various brain regions, including striatum, prefrontal cortex, olfactory bulb, midbrain, cerebellum and hippocampus. Expressed in neural stem cells (at protein level). Expressed in thymocytes.

The protein localises to the nucleus. Functionally, transcription factor, which activates RAG1, and possibly RAG2, transcription. Through the regulation of RAG1/2 expression, may regulate thymocyte maturation. Along with NIPBL and the multiprotein complex Integrator, promotes cortical neuron migration during brain development by regulating the transcription of crucial genes in this process. Preferentially binds promoters containing paused RNA polymerase II. Up-regulates the expression of SEMA3A, NRP1, PLXND1 and GABBR2 genes, among others. In terms of biological role, involved in regulation of myoblast proliferation during myogenesis. This is Zinc finger protein 609 (Znf609) from Mus musculus (Mouse).